We begin with the raw amino-acid sequence, 233 residues long: tRNA (guanine-N(1)-)-methyltransferase (233 aa).

Residues glycine 113 and 133 to 138 each bind S-adenosyl-L-methionine; that span reads VGDYVL.

It belongs to the RNA methyltransferase TrmD family. In terms of assembly, homodimer.

Its subcellular location is the cytoplasm. It carries out the reaction guanosine(37) in tRNA + S-adenosyl-L-methionine = N(1)-methylguanosine(37) in tRNA + S-adenosyl-L-homocysteine + H(+). Functionally, specifically methylates guanosine-37 in various tRNAs. This Rhizobium etli (strain ATCC 51251 / DSM 11541 / JCM 21823 / NBRC 15573 / CFN 42) protein is tRNA (guanine-N(1)-)-methyltransferase.